Consider the following 87-residue polypeptide: Putative defensin-like protein 84 (87 aa).

The signal sequence occupies residues 1-27; the sequence is MTTKMVSSHRLLTLMVFALLLIPMISG. 4 cysteine pairs are disulfide-bonded: cysteine 32–cysteine 73, cysteine 36–cysteine 54, cysteine 42–cysteine 71, and cysteine 46–cysteine 72.

Belongs to the DEFL family.

It localises to the secreted. The chain is Putative defensin-like protein 84 from Arabidopsis thaliana (Mouse-ear cress).